A 157-amino-acid chain; its full sequence is Endoribonuclease YbeY (157 aa).

His-121, His-125, and Asp-131 together coordinate Zn(2+).

The protein belongs to the endoribonuclease YbeY family. Requires Zn(2+) as cofactor.

It is found in the cytoplasm. In terms of biological role, single strand-specific metallo-endoribonuclease involved in late-stage 70S ribosome quality control and in maturation of the 3' terminus of the 16S rRNA. The protein is Endoribonuclease YbeY of Salinibacter ruber (strain DSM 13855 / M31).